A 723-amino-acid polypeptide reads, in one-letter code: BTB/POZ domain-containing protein 18 (723 aa).

The 69-residue stretch at 34 to 102 folds into the BTB domain; it reads CDALLQAEGE…LYTSEMEVSQ (69 aa). Disordered regions lie at residues 150 to 176, 188 to 350, and 370 to 394; these read APISARVVGPKSRPQTPLPVTQTPSPL, EGAH…EEGQ, and EPPLRNTQDSPQILEPSDVEEPSGT. 2 stretches are compositionally biased toward polar residues: residues 162 to 174 and 195 to 205; these read RPQTPLPVTQTPS and NLPNADSLSDT. Composition is skewed to low complexity over residues 217-227 and 271-286; these read QESRSSPSSQR and TSTPSSILSGPSSMPT. 2 stretches are compositionally biased toward basic and acidic residues: residues 303 to 312 and 327 to 336; these read QGVDKQKPGE and KPAENKKQSP. At Ser414 the chain carries Phosphoserine. Positions 603–637 are disordered; that stretch reads TPDLEITSSQPLDGQGEKLLHFDSSDPSQRSYNHL. Residues 617 to 626 show a composition bias toward basic and acidic residues; the sequence is QGEKLLHFDS. A compositionally biased stretch (polar residues) spans 627–636; the sequence is SDPSQRSYNH. Phosphoserine occurs at positions 682 and 683. The tract at residues 699–723 is disordered; it reads LGPTSVPSVWPDPSSESETEVDILT. Acidic residues predominate over residues 713–723; sequence SESETEVDILT.

As to expression, expressed in testis.

The protein resides in the nucleus. In terms of biological role, specifically required during spermatogenesis to promote expression of piRNA precursors. The piRNA metabolic process mediates the repression of transposable elements during meiosis by forming complexes composed of piRNAs and Piwi proteins and governs the methylation and subsequent repression of transposons, which is essential for the germline integrity. Acts by facilitating transcription elongation at piRNA loci during pachytene. In Mus musculus (Mouse), this protein is BTB/POZ domain-containing protein 18.